The primary structure comprises 144 residues: Austinoid biosynthesis clusters protein S (144 aa).

The protein belongs to the trt14 isomerase family. In terms of assembly, homodimer.

It participates in secondary metabolite biosynthesis; terpenoid biosynthesis. Part of the gene cluster B that mediates the biosynthesis of the fungal meroterpenoid acetoxydehydroaustin. The first step of the pathway is the synthesis of 3,5-dimethylorsellinic acid by the polyketide synthase ausA. 3,5-dimethylorsellinic acid is then prenylated by the polyprenyl transferase ausN. Further epoxidation by the FAD-dependent monooxygenase ausM and cyclization by the probable terpene cyclase ausL lead to the formation of protoaustinoid A. Protoaustinoid A is then oxidized to spiro-lactone preaustinoid A3 by the combined action of the FAD-binding monooxygenases ausB and ausC, and the dioxygenase ausE. Acid-catalyzed keto-rearrangement and ring contraction of the tetraketide portion of preaustinoid A3 by ausJ lead to the formation of preaustinoid A4. The aldo-keto reductase ausK, with the help of ausH, is involved in the next step by transforming preaustinoid A4 into isoaustinone which is in turn hydroxylated by the P450 monooxygenase ausI to form austinolide. The cytochrome P450 monooxygenase ausG then modifies austinolide to austinol. Austinol is further acetylated to austin by the O-acetyltransferase ausP, which spontaneously changes to dehydroaustin. The cytochrome P450 monooxygenase then converts dehydroaustin is into 7-dehydrodehydroaustin. The hydroxylation catalyzed by ausR permits the second O-acetyltransferase ausQ to add an additional acetyl group to the molecule, leading to the formation of acetoxydehydroaustin. Due to genetic rearrangements of the clusters and the subsequent loss of some enzymes, the end product of the Penicillium brasilianum austinoid biosynthesis clusters is acetoxydehydroaustin. AusS is necessary for austinoids production and may play a possible function as a regulator. This chain is Austinoid biosynthesis clusters protein S, found in Penicillium brasilianum.